We begin with the raw amino-acid sequence, 327 residues long: Serine/threonine-protein phosphatase PP2A catalytic subunit (327 aa).

Asp75, His77, Asp103, and Asn135 together coordinate Mn(2+). The active-site Proton donor is the His136. Mn(2+) is bound by residues His185 and His259. Leu327 bears the Leucine methyl ester mark.

The protein belongs to the PPP phosphatase family. PP-2A subfamily. It depends on Mn(2+) as a cofactor.

It carries out the reaction O-phospho-L-seryl-[protein] + H2O = L-seryl-[protein] + phosphate. The catalysed reaction is O-phospho-L-threonyl-[protein] + H2O = L-threonyl-[protein] + phosphate. This Neurospora crassa (strain ATCC 24698 / 74-OR23-1A / CBS 708.71 / DSM 1257 / FGSC 987) protein is Serine/threonine-protein phosphatase PP2A catalytic subunit (pph-1).